We begin with the raw amino-acid sequence, 525 residues long: Cytochrome P450 monooxygenase ltmJ (525 aa).

Residues 21–43 (LTWWQTIVSFIIFCIMCSWLPGN) form a helical membrane-spanning segment. N-linked (GlcNAc...) asparagine glycosylation is present at Asn136. Position 465 (Cys465) interacts with heme.

Belongs to the cytochrome P450 family. The cofactor is heme.

Its subcellular location is the membrane. It participates in secondary metabolite biosynthesis. Its function is as follows. Cytochrome P450 monooxygenase; part of the gene clusters that mediates the biosynthesis of lolitrems, indole-diterpene mycotoxins that are potent tremorgens in mammals, and are synthesized by clavicipitaceous fungal endophytes in association with their grass hosts. The geranylgeranyl diphosphate (GGPP) synthase ltmG is proposed to catalyze the first step in lolitrem biosynthesis. LtmG catalyzes a series of iterative condensations of isopentenyl diphosphate (IPP) with dimethylallyl diphosphate (DMAPP), geranyl diphosphate (GPP), and farnesyl diphosphate (FPP), to form GGPP. GGPP then condenses with indole-3-glycerol phosphate to form 3-geranylgeranylindole, an acyclic intermediate, to be incorporated into paxilline. Either ltmG or ltmC could be responsible for this step, as both are putative prenyl transferases. The FAD-dependent monooxygenase ltmM then catalyzes the epoxidation of the two terminal alkenes of the geranylgeranyl moiety, which is subsequently cyclized by ltmB, to paspaline. The cytochrome P450 monooxygenases ltmQ and ltmP can sequentially oxidize paspaline to terpendole E and terpendole F. Alternatively, ltmP converts paspaline to an intermediate which is oxidized by ltmQ to terpendole F. LtmF, ltmK, ltmE and ltmJ appear to be unique to the epichloe endophytes. The prenyltransferase ltmF is involved in the 27-hydroxyl-O-prenylation. The cytochrome P450 monooxygenase ltmK is required for the oxidative acetal ring formation. The multi-functional prenyltransferase ltmE is required for C20- and C21-prenylations of the indole ring of paspalanes and acts together with the cytochrome P450 monooxygenase ltmJ to yield lolitremanes by multiple oxidations and ring closures. The stereoisomer pairs of lolitriol and lolitrem N or lolitrem B and lolitrem F may be attributed to variations in the way in which ring closure can occur under the action of ltmJ. While the major product of this pathway is lolitrem B, the prenyl transferases and cytochrome P450 monooxygenases identified in this pathway have a remarkable versatility in their regio- and stereo-specificities to generate a diverse range of metabolites that are products of a metabolic grid rather than a linear pathway. The polypeptide is Cytochrome P450 monooxygenase ltmJ (ltmJ) (Epichloe festucae var. lolii (Neotyphodium lolii)).